We begin with the raw amino-acid sequence, 425 residues long: MNQQWNQYIQIIKQVVKPALGCTEPIAAAYAAAVAKRELGCQTPDTIEVRVSDNLFKNSMGVYVPGTGKIGLKIAASVGALAGDPNAELEVLAKINQDDVTAAQQLIDEERVSVARIDTQELIFCSVTMSAGEDTVSVTISGGHTNIIQITRNGVVTFDAPQQQRVATGSVCEGVDISIKQIYDFALQAPFDDIKFILQAAELNSSLAQEGIDRGYGLEIGRTLKGNIEQGLLGNDLMSRIQMMTSAASDARMGGATLPAMSNFGSGNQGIAATMPVVIAAEAFQSSEEHLARALIMSHLGAIYIKSYYPPLSAFCGNTVTSAAASMALVYLAGGTFEQSCYAIQNVISDSSGMVCDGAKSSCAMKVCTSATTAVRSYLMAMGNHSVKNQGIIGDEVEQTIRNVGSMVRLGMPYTDKSIIDIMSA.

It belongs to the UPF0597 family.

This chain is UPF0597 protein VIBHAR_03081, found in Vibrio campbellii (strain ATCC BAA-1116).